A 262-amino-acid polypeptide reads, in one-letter code: Type III pantothenate kinase (262 aa).

ATP is bound at residue 7–14 (DIGNTRLK). Substrate-binding positions include Tyr96 and 103-106 (GSDR). Catalysis depends on Asp105, which acts as the Proton acceptor. Residue Thr137 coordinates ATP. Thr187 is a binding site for substrate.

This sequence belongs to the type III pantothenate kinase family. As to quaternary structure, homodimer. It depends on NH4(+) as a cofactor. The cofactor is K(+).

The protein localises to the cytoplasm. It carries out the reaction (R)-pantothenate + ATP = (R)-4'-phosphopantothenate + ADP + H(+). It functions in the pathway cofactor biosynthesis; coenzyme A biosynthesis; CoA from (R)-pantothenate: step 1/5. Its function is as follows. Catalyzes the phosphorylation of pantothenate (Pan), the first step in CoA biosynthesis. This is Type III pantothenate kinase from Leptothrix cholodnii (strain ATCC 51168 / LMG 8142 / SP-6) (Leptothrix discophora (strain SP-6)).